Here is a 126-residue protein sequence, read N- to C-terminus: Large ribosomal subunit protein uL22 (126 aa).

Belongs to the universal ribosomal protein uL22 family. As to quaternary structure, part of the 50S ribosomal subunit.

Its function is as follows. This protein binds specifically to 23S rRNA; its binding is stimulated by other ribosomal proteins, e.g. L4, L17, and L20. It is important during the early stages of 50S assembly. It makes multiple contacts with different domains of the 23S rRNA in the assembled 50S subunit and ribosome. Functionally, the globular domain of the protein is located near the polypeptide exit tunnel on the outside of the subunit, while an extended beta-hairpin is found that lines the wall of the exit tunnel in the center of the 70S ribosome. The protein is Large ribosomal subunit protein uL22 of Cereibacter sphaeroides (strain ATCC 17029 / ATH 2.4.9) (Rhodobacter sphaeroides).